The sequence spans 331 residues: tRNA-modifying protein YgfZ (331 aa).

Folate contacts are provided by tryptophan 28 and tryptophan 191.

The protein belongs to the tRNA-modifying YgfZ family.

The protein localises to the cytoplasm. In terms of biological role, folate-binding protein involved in regulating the level of ATP-DnaA and in the modification of some tRNAs. It is probably a key factor in regulatory networks that act via tRNA modification, such as initiation of chromosomal replication. The chain is tRNA-modifying protein YgfZ from Edwardsiella ictaluri (strain 93-146).